A 177-amino-acid polypeptide reads, in one-letter code: MSRVAKKPIALPSGVNVTINGNNVALKGPKGQLSYDLHADVEVSQEGNTLQLAPRNGDASKYAMAGTMRALVNNMVVGVSQGFERKLELVGVGYRAQAQGKTLNLTLGFSHPVAYPVPEGITIETPSQTEILVKGVDKQVVGQVAAEIRAFRPPEPYKGKGVKYANEQIIRKEAKKK.

This sequence belongs to the universal ribosomal protein uL6 family. As to quaternary structure, part of the 50S ribosomal subunit.

This protein binds to the 23S rRNA, and is important in its secondary structure. It is located near the subunit interface in the base of the L7/L12 stalk, and near the tRNA binding site of the peptidyltransferase center. The protein is Large ribosomal subunit protein uL6 of Thioalkalivibrio sulfidiphilus (strain HL-EbGR7).